We begin with the raw amino-acid sequence, 178 residues long: Endothelin-2 (178 aa).

The first 24 residues, 1-24, serve as a signal peptide directing secretion; that stretch reads MVSVPTAWCSVALALLVALHEGKD. The propeptide occupies 25 to 46; it reads QAAATLEQPASSPRARAAHLRL. Disulfide bonds link C49-C63 and C51-C59. A propeptide spanning residues 70 to 178 is cleaved from the precursor; it reads VNTPGQTAPY…RTTHSRHRKR (109 aa). Residues 96–111 are endothelin-like; sequence CECSSARDPACATFCH. The tract at residues 154 to 178 is disordered; sequence KTHFAKRQQEATREPRTTHSRHRKR. The span at 160-170 shows a compositional bias: basic and acidic residues; the sequence is RQQEATREPRT.

Belongs to the endothelin/sarafotoxin family.

The protein localises to the secreted. Endothelins are endothelium-derived vasoconstrictor peptides. In Oryctolagus cuniculus (Rabbit), this protein is Endothelin-2 (EDN2).